The primary structure comprises 158 residues: Small ribosomal subunit protein uS7 (158 aa).

It belongs to the universal ribosomal protein uS7 family. In terms of assembly, part of the 30S ribosomal subunit. Contacts proteins S9 and S11.

Functionally, one of the primary rRNA binding proteins, it binds directly to 16S rRNA where it nucleates assembly of the head domain of the 30S subunit. Is located at the subunit interface close to the decoding center, probably blocks exit of the E-site tRNA. The chain is Small ribosomal subunit protein uS7 from Flavobacterium psychrophilum (strain ATCC 49511 / DSM 21280 / CIP 103535 / JIP02/86).